A 347-amino-acid chain; its full sequence is Twinfilin-2 (347 aa).

2 consecutive ADF-H domains span residues 3-137 (LVLV…RHIT) and 175-311 (GLAF…DEVH). Residues 314–347 (QHAHKQAFAKPRGPAGKRGNKRLIKGGGENGGNS) are disordered. Over residues 338 to 347 (KGGGENGGNS) the composition is skewed to gly residues.

It belongs to the actin-binding proteins ADF family. Twinfilin subfamily. In terms of assembly, interacts with G-actin; ADP-actin form and capping protein (CP).

It is found in the cytoplasm. The protein localises to the cytoskeleton. The protein resides in the perinuclear region. Its function is as follows. Actin-binding protein involved in motile and morphological processes. Inhibits actin polymerization, likely by sequestering G-actin. The protein is Twinfilin-2 (twf2) of Danio rerio (Zebrafish).